The following is a 126-amino-acid chain: Small ribosomal subunit protein uS13 (126 aa).

Positions 95–126 (NLPVHGQRTHTNARTRKGPRRAIAGKKKAGKK) are disordered.

It belongs to the universal ribosomal protein uS13 family. As to quaternary structure, part of the 30S ribosomal subunit. Forms a loose heterodimer with protein S19. Forms two bridges to the 50S subunit in the 70S ribosome.

Functionally, located at the top of the head of the 30S subunit, it contacts several helices of the 16S rRNA. In the 70S ribosome it contacts the 23S rRNA (bridge B1a) and protein L5 of the 50S subunit (bridge B1b), connecting the 2 subunits; these bridges are implicated in subunit movement. Contacts the tRNAs in the A and P-sites. The chain is Small ribosomal subunit protein uS13 from Frankia casuarinae (strain DSM 45818 / CECT 9043 / HFP020203 / CcI3).